A 416-amino-acid chain; its full sequence is Gap junction alpha-3 protein (416 aa).

An intramembrane segment occupies 2–15; it reads GDWSFLGRLLENAQ. Over 16 to 19 the chain is Cytoplasmic; the sequence is EHST. The chain crosses the membrane as a helical span at residues 20 to 40; it reads VIGKVWLTVLFIFRILVLGAA. Residues 41–71 lie on the Extracellular side of the membrane; sequence AEEVWGDEQSDFTCNTQQPGCENVCYDRAFP. Intrachain disulfides connect C54–C198, C61–C192, and C65–C187. The helical transmembrane segment at 72–92 threads the bilayer; that stretch reads ISHIRFWALQIIFVSTPTLIY. Residues 93 to 158 are Cytoplasmic-facing; that stretch reads LGHVLHIVRM…GALLRTYVFN (66 aa). Residues 110–128 are compositionally biased toward basic and acidic residues; it reads EEELLRRDNPQHGRGREPM. A disordered region spans residues 110–141; that stretch reads EEELLRRDNPQHGRGREPMRTGSPRDPPLRDD. Residues 159 to 179 form a helical membrane-spanning segment; it reads IIFKTLFEVGFIAGQYFLYGF. Residues 180–207 lie on the Extracellular side of the membrane; the sequence is QLQPLYRCDRWPCPNTVDCFISRPTEKT. Residues 208-228 form a helical membrane-spanning segment; sequence IFVIFMLAVACASLVLNMLEI. Residues 229–416 lie on the Cytoplasmic side of the membrane; the sequence is YHLGWKKLKQ…GRARPGDLAI (188 aa). Residues 336 to 416 are disordered; it reads GAEPQTPASK…GRARPGDLAI (81 aa). Residues 342 to 353 show a composition bias toward low complexity; sequence PASKPSSAASSP.

This sequence belongs to the connexin family. Alpha-type (group II) subfamily. In terms of assembly, a hemichannel or connexon is composed of a hexamer of connexins. A functional gap junction is formed by the apposition of two hemichannels. Forms heteromeric channels with GJA8. As to expression, detected in eye lens (at protein level). Most abundant in lens, but also present in heart and kidney.

It localises to the cell membrane. The protein localises to the cell junction. The protein resides in the gap junction. Its function is as follows. Structural component of lens fiber gap junctions. Gap junctions are dodecameric channels that connect the cytoplasm of adjoining cells. They are formed by the docking of two hexameric hemichannels, one from each cell membrane. Small molecules and ions diffuse from one cell to a neighboring cell via the central pore. This Rattus norvegicus (Rat) protein is Gap junction alpha-3 protein (Gja3).